The chain runs to 129 residues: PGLAFSGLTPEHSALARAHPCDGEQFCQNLAPEDPQGDQLLQREELGLICESCRKIIQKLEDMVGPQPNEDTVTQAASRVCDKMKILRGVCKKIMRTFLRRISKDILTGKKPQAICVDIKICKEKTGLI.

Positions 1–6 are cleaved as a signal peptide; it reads PGLAFS. A propeptide spanning residues 7–46 is cleaved from the precursor; it reads GLTPEHSALARAHPCDGEQFCQNLAPEDPQGDQLLQREEL. Residues 46–126 form the Saposin B-type domain; that stretch reads LGLICESCRK…VDIKICKEKT (81 aa). 3 disulfide bridges follow: Cys50-Cys122, Cys53-Cys116, and Cys81-Cys91. Positions 125-129 are excised as a propeptide; it reads KTGLI.

Cytotoxic T and NK cells.

It is found in the secreted. Functionally, may be an effector molecule of cytotoxic activity. High activity against E.coli and B.megaterium, moderate against A.calcoaceticus and S.pyogenes. No activity against P.aeruginosa, S.aureus and Salmonella. Has some antifungal activity against C.albicans. The polypeptide is Antimicrobial peptide NK-lysin (NKL) (Sus scrofa (Pig)).